The sequence spans 138 residues: Small ribosomal subunit protein uS11c (138 aa).

It belongs to the universal ribosomal protein uS11 family. As to quaternary structure, part of the 30S ribosomal subunit.

It localises to the plastid. This Cuscuta obtusiflora (Peruvian dodder) protein is Small ribosomal subunit protein uS11c.